The sequence spans 392 residues: L-rhamnonate dehydratase (392 aa).

The substrate site is built by H22 and R48. 3 residues coordinate Mg(2+): D214, E240, and E268. Catalysis depends on H318, which acts as the Proton acceptor. E338 lines the substrate pocket.

Belongs to the mandelate racemase/muconate lactonizing enzyme family. RhamD subfamily. As to quaternary structure, homooctamer; tetramer of dimers. The cofactor is Mg(2+).

It catalyses the reaction L-rhamnonate = 2-dehydro-3-deoxy-L-rhamnonate + H2O. Catalyzes the dehydration of L-rhamnonate to 2-keto-3-deoxy-L-rhamnonate (KDR). In Burkholderia ambifaria (strain MC40-6), this protein is L-rhamnonate dehydratase.